The chain runs to 934 residues: ATP-dependent RNA helicase dbp-10 (934 aa).

The interval 21-43 is disordered; that stretch reads LFNNDSDFEDNSSKHHTKKGAVT. A Q motif motif is present at residues 99-127; that stretch reads GGFQAMGLNAHLLRAITRKGFSVPTPIQR. Positions 130 to 302 constitute a Helicase ATP-binding domain; it reads IPLILERKDV…RAGLQEPSLV (173 aa). 143 to 150 lines the ATP pocket; sequence ARTGSGKT. Positions 250-253 match the DEAD box motif; it reads DEAD. Disordered regions lie at residues 343–370, 613–722, and 851–934; these read GPPEGTKEESDELQARKRKREYRPNPKE, ELGP…FQDP, and GAQP…RQKR. Residues 359–513 form the Helicase C-terminal domain; it reads KRKREYRPNP…KNPSFAADVV (155 aa). Acidic residues-rich tracts occupy residues 644 to 654 and 662 to 700; these read DEDDEDVDMED and EETNAFEDFEDEEEEGEAEEAEEAEAKEDPYADDSDSEM. The span at 864-926 shows a compositional bias: basic and acidic residues; the sequence is EKAPKDADKF…VAEKKREKNA (63 aa).

It belongs to the DEAD box helicase family. DDX54/DBP10 subfamily.

Its subcellular location is the nucleus. The protein localises to the nucleolus. It catalyses the reaction ATP + H2O = ADP + phosphate + H(+). Functionally, ATP-binding RNA helicase involved in the biogenesis of 60S ribosomal subunits and is required for the normal formation of 25S and 5.8S rRNAs. In Neurospora crassa (strain ATCC 24698 / 74-OR23-1A / CBS 708.71 / DSM 1257 / FGSC 987), this protein is ATP-dependent RNA helicase dbp-10 (dbp-10).